The chain runs to 625 residues: Dual specificity protein phosphatase 8 (625 aa).

The Rhodanese domain occupies 23–138 (GPGGPLVIDS…FSSCFPGLCE (116 aa)). Positions 160–302 (GLTRILPHLY…LLEYERSLKL (143 aa)) constitute a Tyrosine-protein phosphatase domain. Cys-246 (phosphocysteine intermediate) is an active-site residue. The segment at 306 to 586 (LQGDPGTPSG…PAPETQFKRR (281 aa)) is disordered. Residues 380–389 (SSDRLQDTNR) are compositionally biased toward basic and acidic residues. Residues 431–448 (AALGLSSPSPDSPDAAPE) are compositionally biased toward low complexity. Residues 555–570 (DLRRREAARAEPRDAR) are compositionally biased toward basic and acidic residues.

This sequence belongs to the protein-tyrosine phosphatase family. Non-receptor class dual specificity subfamily. In terms of assembly, monomer. Abundant in brain, heart and skeletal muscle.

The protein resides in the cytoplasm. It is found in the nucleus. It catalyses the reaction O-phospho-L-tyrosyl-[protein] + H2O = L-tyrosyl-[protein] + phosphate. The catalysed reaction is O-phospho-L-seryl-[protein] + H2O = L-seryl-[protein] + phosphate. It carries out the reaction O-phospho-L-threonyl-[protein] + H2O = L-threonyl-[protein] + phosphate. In terms of biological role, has phosphatase activity with synthetic phosphatase substrates and negatively regulates mitogen-activated protein kinase activity, presumably by catalysing their dephosphorylation. Expected to display protein phosphatase activity toward phosphotyrosine, phosphoserine and phosphothreonine residues. The sequence is that of Dual specificity protein phosphatase 8 (DUSP8) from Homo sapiens (Human).